The sequence spans 83 residues: Cytochrome b559 subunit alpha (83 aa).

Residues 21-35 (VIHSITIPSLFIAGW) traverse the membrane as a helical segment. Residue His23 participates in heme binding.

Belongs to the PsbE/PsbF family. Heterodimer of an alpha subunit and a beta subunit. PSII is composed of 1 copy each of membrane proteins PsbA, PsbB, PsbC, PsbD, PsbE, PsbF, PsbH, PsbI, PsbJ, PsbK, PsbL, PsbM, PsbT, PsbX, PsbY, PsbZ, Psb30/Ycf12, at least 3 peripheral proteins of the oxygen-evolving complex and a large number of cofactors. It forms dimeric complexes. The cofactor is heme b.

The protein localises to the plastid. Its subcellular location is the chloroplast thylakoid membrane. Functionally, this b-type cytochrome is tightly associated with the reaction center of photosystem II (PSII). PSII is a light-driven water:plastoquinone oxidoreductase that uses light energy to abstract electrons from H(2)O, generating O(2) and a proton gradient subsequently used for ATP formation. It consists of a core antenna complex that captures photons, and an electron transfer chain that converts photonic excitation into a charge separation. This chain is Cytochrome b559 subunit alpha, found in Helianthus annuus (Common sunflower).